Reading from the N-terminus, the 848-residue chain is Crooked neck-like protein 1 (848 aa).

T2 is modified (N-acetylalanine). The segment at 81-106 is disordered; sequence RSSRTPHSTRCRKEDAQPGHHGNGAA. HAT repeat units lie at residues 222-254, 256-288, 290-322, 324-355, 357-388, 390-425, 427-461, 471-503, 505-539, 549-585, 587-618, 620-652, 654-688, 690-721, 726-767, 769-807, and 809-834; these read DYKL…WEES, KEIQ…MEMK, RQVN…MEEM, GNVA…FELR, KEVD…FEEK, AYFA…FEEN, KEFE…FEKK, IIVS…LVES, AEAE…LWIN, KDPE…FEIR, KNLS…LELQ, REFD…LETI, GDID…FEIE, EETE…FELS, GSLT…EFGT, SDKE…YIFP, and DAAN…EKED. A mediates interaction with HSP90 region spans residues 411 to 628; that stretch reads MDEHLYVAFA…LREFDRCRKL (218 aa). Residue S503 is modified to Phosphoserine. Positions 827-848 are disordered; it reads KQQQEKEDAEHHPDEDVDESES. The segment covering 828 to 840 has biased composition (basic and acidic residues); that stretch reads QQQEKEDAEHHPD.

Belongs to the crooked-neck family. Identified in the spliceosome C complex. Present in a spliceosome complex assembled in vitro containing CRNKL1, HPRP8BP and SNRPB2. Component of the minor spliceosome, which splices U12-type introns. Isoform 2 seems to be predominant in the spliceosome complex. Interacts with PPIL2 (via the PPIase cyclophilin-type domain); they may form a trimeric complex with HSP90. Widely expressed. Highly expressed in testis. Not detected in brain and lung.

The protein localises to the nucleus. Its subcellular location is the nucleus speckle. Its function is as follows. Involved in pre-mRNA splicing process. As a component of the minor spliceosome, involved in the splicing of U12-type introns in pre-mRNAs. This Homo sapiens (Human) protein is Crooked neck-like protein 1 (CRNKL1).